The primary structure comprises 380 residues: Aminomethyltransferase (380 aa).

The protein belongs to the GcvT family. The glycine cleavage system is composed of four proteins: P, T, L and H.

It catalyses the reaction N(6)-[(R)-S(8)-aminomethyldihydrolipoyl]-L-lysyl-[protein] + (6S)-5,6,7,8-tetrahydrofolate = N(6)-[(R)-dihydrolipoyl]-L-lysyl-[protein] + (6R)-5,10-methylene-5,6,7,8-tetrahydrofolate + NH4(+). In terms of biological role, the glycine cleavage system catalyzes the degradation of glycine. This Koribacter versatilis (strain Ellin345) protein is Aminomethyltransferase.